Consider the following 383-residue polypeptide: Pleckstrin homology domain-containing family A member 1 (383 aa).

PH domains are found at residues 7–112 (QNRI…KAIK) and 191–289 (AVIK…GAIV). At Val284 the chain carries Phosphoserine. The segment at 362 to 383 (LPRSSQGTSRSRLSLQESQLPK) is disordered. Positions 370-383 (SRSRLSLQESQLPK) are enriched in low complexity.

In terms of assembly, interacts with MPDZ and PTPN13.

The protein resides in the cytoplasm. It localises to the cell membrane. It is found in the nucleus. Functionally, binds specifically to phosphatidylinositol 3,4-diphosphate (PtdIns3,4P2), but not to other phosphoinositides. May recruit other proteins to the plasma membrane. This is Pleckstrin homology domain-containing family A member 1 (Plekha1) from Mus musculus (Mouse).